Reading from the N-terminus, the 99-residue chain is SAGA-associated factor 11 (99 aa).

The segment at 71–92 (IHCENCGRDVSANRLAAHLQRC) adopts an SGF11-type zinc-finger fold.

The protein belongs to the SGF11 family. Component of the 1.8 MDa SAGA transcription coactivator-HAT complex. SAGA is built of 5 distinct domains with specialized functions. Within the SAGA complex, SUS1, SGF11, SGF73 and UBP8 form an additional subcomplex of SAGA called the DUB module (deubiquitination module). Interacts directly with SGF73, SUS1 and UBP8.

The protein localises to the nucleus. Functions as a component of the transcription regulatory histone acetylation (HAT) complex SAGA. At the promoters, SAGA is required for recruitment of the basal transcription machinery. It influences RNA polymerase II transcriptional activity through different activities such as TBP interaction and promoter selectivity, interaction with transcription activators, and chromatin modification through histone acetylation and deubiquitination. SAGA acetylates nucleosomal histone H3 to some extent (to form H3K9ac, H3K14ac, H3K18ac and H3K23ac). SAGA interacts with DNA via upstream activating sequences (UASs). Involved in transcriptional regulation of a subset of SAGA-regulated genes. Within the SAGA complex, participates in a subcomplex, that specifically deubiquitinates histones H2B. This Saccharomyces cerevisiae (strain RM11-1a) (Baker's yeast) protein is SAGA-associated factor 11.